An 827-amino-acid polypeptide reads, in one-letter code: ADP-ribosylation factor GTPase-activating protein AGD3 (827 aa).

Residues 1–225 (MHFTKLDDSP…INQVLTYAQQ (225 aa)) enclose the BAR domain. Coiled-coil stretches lie at residues 116–139 (HEVKEARKRFDKASLTYDQAREKF) and 223–253 (AQQSRERSNYEQAALNEKMQEYKRQVDRESR). Positions 246–269 (RQVDRESRWGSNGSNGSPNGDGIQ) are disordered. The span at 255-267 (GSNGSNGSPNGDG) shows a compositional bias: low complexity. Residues 292-430 (QTIRQGYLSK…WIEKITGVIA (139 aa)) form the PH domain. Residues 439–467 (EQRLPGSPMGSGHHRSASESSSYESSEYD) form a disordered region. Position 445 is a phosphoserine (Ser445). An Arf-GAP domain is found at 501 to 643 (EKPIDALRKV…LFVRRSRDSD (143 aa)). Residues 516–539 (CADCGAPEPDWASLNLGVLVCIEC) form a C4-type zinc finger. ANK repeat units follow at residues 728-757 (GGSSLLHCACEKADLGMVELLLQYGANVNA), 761-790 (SGQTPLHCCLLRGKVTIARLLLTRGADPEA), and 794-825 (EGKTALDIAAESNFTDPEVLALLSDTNGYNHR).

Homodimer. Interacts with DRP1A. Interacts with VAB. Broadly expressed. Detected in developing veins of the leaf and root. Detected in roots, hypocotyls, cotyledons, leaves, siliques and shoot apical meristems.

The protein localises to the golgi apparatus. It localises to the trans-Golgi network. With respect to regulation, ARF GAP activity strongly enhanced by phosphatidylinositol 4-monophosphate (PIP) and moderately enhanced by phosphatidylinositol 4,5-bisphosphate (PIP2). GTPase-activating protein (GAP) for ADP ribosylation factor (ARF). Involved in the spatial control of provascular differentiation. Required for the formation of the normal pattern of continuous secondary veins. Involved in auxin signaling but not in polar auxin transport or in auxin responses. Required for PIN1 internalization in roots. The chain is ADP-ribosylation factor GTPase-activating protein AGD3 (AGD3) from Arabidopsis thaliana (Mouse-ear cress).